The sequence spans 103 residues: A-type ATP synthase subunit F (103 aa).

This sequence belongs to the V-ATPase F subunit family. Has multiple subunits with at least A(3), B(3), C, D, E, F, H, I and proteolipid K(x).

The protein localises to the cell membrane. Functionally, component of the A-type ATP synthase that produces ATP from ADP in the presence of a proton gradient across the membrane. This is A-type ATP synthase subunit F from Pyrococcus furiosus (strain ATCC 43587 / DSM 3638 / JCM 8422 / Vc1).